Consider the following 131-residue polypeptide: MWNEFKKFAIRGNVIDLAVGVIIGGAFGKIVSSLVNDIIMPLVGLILGGINFSDLSWKVGKAEVKYGAFIQTVVDFLIIAFSIFLFVKLINTLYERVKKQEEVKETAPTLTKEEELLTEIRDLLKQQRETT.

3 consecutive transmembrane segments (helical) span residues 8–28, 30–50, and 67–87; these read FAIRGNVIDLAVGVIIGGAFG, IVSSLVNDIIMPLVGLILGGI, and GAFIQTVVDFLIIAFSIFLFV.

Belongs to the MscL family. As to quaternary structure, homopentamer.

It is found in the cell membrane. In terms of biological role, channel that opens in response to stretch forces in the membrane lipid bilayer. May participate in the regulation of osmotic pressure changes within the cell. This Geobacillus kaustophilus (strain HTA426) protein is Large-conductance mechanosensitive channel.